A 184-amino-acid polypeptide reads, in one-letter code: Ribosome-recycling factor (184 aa).

The protein belongs to the RRF family.

It localises to the cytoplasm. Functionally, responsible for the release of ribosomes from messenger RNA at the termination of protein biosynthesis. May increase the efficiency of translation by recycling ribosomes from one round of translation to another. In Acholeplasma laidlawii (strain PG-8A), this protein is Ribosome-recycling factor.